The chain runs to 291 residues: ATP synthase gamma chain (291 aa).

It belongs to the ATPase gamma chain family. In terms of assembly, F-type ATPases have 2 components, CF(1) - the catalytic core - and CF(0) - the membrane proton channel. CF(1) has five subunits: alpha(3), beta(3), gamma(1), delta(1), epsilon(1). CF(0) has three main subunits: a, b and c.

The protein resides in the cell inner membrane. In terms of biological role, produces ATP from ADP in the presence of a proton gradient across the membrane. The gamma chain is believed to be important in regulating ATPase activity and the flow of protons through the CF(0) complex. The sequence is that of ATP synthase gamma chain from Chlorobium phaeobacteroides (strain DSM 266 / SMG 266 / 2430).